The chain runs to 258 residues: 3-deoxy-manno-octulosonate cytidylyltransferase (258 aa).

Belongs to the KdsB family.

The protein resides in the cytoplasm. It carries out the reaction 3-deoxy-alpha-D-manno-oct-2-ulosonate + CTP = CMP-3-deoxy-beta-D-manno-octulosonate + diphosphate. It functions in the pathway nucleotide-sugar biosynthesis; CMP-3-deoxy-D-manno-octulosonate biosynthesis; CMP-3-deoxy-D-manno-octulosonate from 3-deoxy-D-manno-octulosonate and CTP: step 1/1. It participates in bacterial outer membrane biogenesis; lipopolysaccharide biosynthesis. In terms of biological role, activates KDO (a required 8-carbon sugar) for incorporation into bacterial lipopolysaccharide in Gram-negative bacteria. The sequence is that of 3-deoxy-manno-octulosonate cytidylyltransferase from Pasteurella multocida (strain Pm70).